A 441-amino-acid polypeptide reads, in one-letter code: Vacuolar cation/proton exchanger 2 (441 aa).

Residues 1–69 (MSCCKVPVLI…PKNSVLNSIK (69 aa)) lie on the Cytoplasmic side of the membrane. Residues 70–90 (IVIFCNKLNLLLPFGPLAILV) traverse the membrane as a helical segment. At 91 to 97 (HYMIDSK) the chain is on the extracellular side. A helical transmembrane segment spans residues 98-118 (GWVFLLTLVGITPLAERLGYA). The Cytoplasmic portion of the chain corresponds to 119–129 (TEQLACYTGPT). A helical transmembrane segment spans residues 130 to 150 (VGGLLNATFGNVTELIISIFA). Residues 139 to 174 (GNVTELIISIFALKNGMIRVVQLTLLGSILSNMLLV) form a cation selection region. Residues 151–166 (LKNGMIRVVQLTLLGS) are Extracellular-facing. A helical transmembrane segment spans residues 167–187 (ILSNMLLVLGCAFFCGGLVFY). The Cytoplasmic segment spans residues 188-196 (QKDQVFDKG). A helical transmembrane segment spans residues 197–217 (IATVNSGLLLMAVMGILFPAV). The Extracellular segment spans residues 218 to 231 (LHYTHSEVHAGSSE). The helical transmembrane segment at 232–252 (LALSRFSSCIMLIAYAAYLFF) threads the bilayer. Residues 253–286 (QLKSQSNSYSPLDEESNQNEETSAEDEDPEISKW) lie on the Cytoplasmic side of the membrane. The chain crosses the membrane as a helical span at residues 287 to 307 (EAIIWLSILTAWVSLLSGYLV). At 308–311 (DAIE) the chain is on the extracellular side. Residues 312–332 (GASVSWNIPIAFISTILLPIV) traverse the membrane as a helical segment. Over 333–354 (GNAAEHAGAIMFAMKDKLDLSL) the chain is Cytoplasmic. The tract at residues 333-368 (GNAAEHAGAIMFAMKDKLDLSLGVAIGSSIQISMFA) is cation selection. Residues 355–375 (GVAIGSSIQISMFAVPFCVVI) form a helical membrane-spanning segment. Residues 376–384 (GWMMGQQMD) lie on the Extracellular side of the membrane. A helical membrane pass occupies residues 385–405 (LNFQLFETAMLFITVIVVAFF). Residues 406–412 (LQEGSSN) are Cytoplasmic-facing. Residues 413 to 433 (YFKGLMLILCYLIVAASFFVH) form a helical membrane-spanning segment. At 434–441 (EDPHQDGI) the chain is on the extracellular side.

Belongs to the Ca(2+):cation antiporter (CaCA) (TC 2.A.19) family. Cation/proton exchanger (CAX) subfamily.

Its subcellular location is the vacuole membrane. Its activity is regulated as follows. Inhibited by excess of Ca(2+) and Cd(2+), Mn(2+), and Zn(2+). Vacuolar cation/proton exchanger (CAX). Translocates Ca(2+) and other metal ions into vacuoles using the proton gradient formed by H(+)-ATPase and H(+)-pyrophosphatase. The sequence is that of Vacuolar cation/proton exchanger 2 (CAX2) from Arabidopsis thaliana (Mouse-ear cress).